The primary structure comprises 315 residues: Phosphatidylglycerol--prolipoprotein diacylglyceryl transferase (315 aa).

The next 2 helical transmembrane spans lie at 19 to 39 and 93 to 113; these read FTIHMYAICILIGICVAVWIL and VWEGGMAIFGGISVGTLVAFL. A 1,2-diacyl-sn-glycero-3-phospho-(1'-sn-glycerol) is bound at residue arginine 141. A run of 2 helical transmembrane segments spans residues 188-208 and 256-276; these read LFHPTFLYEMIWNLIGAALII and VWTAIIVFVLGCILFVVLYQY.

This sequence belongs to the Lgt family.

The protein localises to the cell membrane. The enzyme catalyses L-cysteinyl-[prolipoprotein] + a 1,2-diacyl-sn-glycero-3-phospho-(1'-sn-glycerol) = an S-1,2-diacyl-sn-glyceryl-L-cysteinyl-[prolipoprotein] + sn-glycerol 1-phosphate + H(+). The protein operates within protein modification; lipoprotein biosynthesis (diacylglyceryl transfer). Catalyzes the transfer of the diacylglyceryl group from phosphatidylglycerol to the sulfhydryl group of the N-terminal cysteine of a prolipoprotein, the first step in the formation of mature lipoproteins. This Bifidobacterium longum (strain DJO10A) protein is Phosphatidylglycerol--prolipoprotein diacylglyceryl transferase.